The following is a 296-amino-acid chain: Methylsterol monooxygenase 1 (296 aa).

2 helical membrane passes run 55-75 (LLVH…FQFI) and 100-120 (TLIF…YYFT). The 130-residue stretch at 145–274 (CAVIEDAWHY…FTWWDRIFGT (130 aa)) folds into the Fatty acid hydroxylase domain. The Histidine box-1 motif lies at 157-161 (HRLLH). Positions 170–174 (HKVHH) match the Histidine box-2 motif. Residues 199-219 (FFIGIVVFCNHVVLLWAWVIC) traverse the membrane as a helical segment. The Histidine box-3 motif lies at 249–255 (FHDFHHM).

Belongs to the sterol desaturase family. Fe cation is required as a cofactor.

The protein localises to the endoplasmic reticulum membrane. The catalysed reaction is 4,4-dimethyl-5alpha-cholest-7-en-3beta-ol + 6 Fe(II)-[cytochrome b5] + 3 O2 + 5 H(+) = 4alpha-carboxy-4beta-methyl-5alpha-cholest-7-ene-3beta-ol + 6 Fe(III)-[cytochrome b5] + 4 H2O. It participates in steroid biosynthesis; zymosterol biosynthesis; zymosterol from lanosterol: step 3/6. Functionally, catalyzes the first step in the removal of the two C-4 methyl groups of 4,4-dimethylzymosterol. The protein is Methylsterol monooxygenase 1 (MSMO1) of Gallus gallus (Chicken).